The primary structure comprises 496 residues: UDP-N-acetylmuramoyl-L-alanyl-D-glutamate--2,6-diaminopimelate ligase (496 aa).

UDP-N-acetyl-alpha-D-muramoyl-L-alanyl-D-glutamate is bound by residues Leu-24 and Ser-26. Position 109 to 115 (109 to 115 (GTNGKTS)) interacts with ATP. UDP-N-acetyl-alpha-D-muramoyl-L-alanyl-D-glutamate is bound by residues 151–152 (TT), Ser-178, Gln-184, and Arg-186. N6-carboxylysine is present on Lys-218. Meso-2,6-diaminopimelate is bound by residues Arg-387, 411-414 (DNPR), Gly-462, and Glu-466. The Meso-diaminopimelate recognition motif motif lies at 411-414 (DNPR).

The protein belongs to the MurCDEF family. MurE subfamily. Mg(2+) serves as cofactor. In terms of processing, carboxylation is probably crucial for Mg(2+) binding and, consequently, for the gamma-phosphate positioning of ATP.

The protein resides in the cytoplasm. The enzyme catalyses UDP-N-acetyl-alpha-D-muramoyl-L-alanyl-D-glutamate + meso-2,6-diaminopimelate + ATP = UDP-N-acetyl-alpha-D-muramoyl-L-alanyl-gamma-D-glutamyl-meso-2,6-diaminopimelate + ADP + phosphate + H(+). It functions in the pathway cell wall biogenesis; peptidoglycan biosynthesis. Its function is as follows. Catalyzes the addition of meso-diaminopimelic acid to the nucleotide precursor UDP-N-acetylmuramoyl-L-alanyl-D-glutamate (UMAG) in the biosynthesis of bacterial cell-wall peptidoglycan. The polypeptide is UDP-N-acetylmuramoyl-L-alanyl-D-glutamate--2,6-diaminopimelate ligase (Pseudomonas putida (strain ATCC 47054 / DSM 6125 / CFBP 8728 / NCIMB 11950 / KT2440)).